A 154-amino-acid polypeptide reads, in one-letter code: Xanthine-guanine phosphoribosyltransferase (154 aa).

Residues R38–G39, K71, and D90–T98 contribute to the 5-phospho-alpha-D-ribose 1-diphosphate site. K71 provides a ligand contact to GMP. A Mg(2+)-binding site is contributed by D91. 2 residues coordinate guanine: D94 and I137. The xanthine site is built by D94 and I137. Residues D94–T98 and W136–I137 each bind GMP.

It belongs to the purine/pyrimidine phosphoribosyltransferase family. XGPT subfamily. Homotetramer. It depends on Mg(2+) as a cofactor.

The protein localises to the cell inner membrane. It carries out the reaction GMP + diphosphate = guanine + 5-phospho-alpha-D-ribose 1-diphosphate. It catalyses the reaction XMP + diphosphate = xanthine + 5-phospho-alpha-D-ribose 1-diphosphate. The catalysed reaction is IMP + diphosphate = hypoxanthine + 5-phospho-alpha-D-ribose 1-diphosphate. Its pathway is purine metabolism; GMP biosynthesis via salvage pathway; GMP from guanine: step 1/1. The protein operates within purine metabolism; XMP biosynthesis via salvage pathway; XMP from xanthine: step 1/1. Its function is as follows. Purine salvage pathway enzyme that catalyzes the transfer of the ribosyl-5-phosphate group from 5-phospho-alpha-D-ribose 1-diphosphate (PRPP) to the N9 position of the 6-oxopurines guanine and xanthine to form the corresponding ribonucleotides GMP (guanosine 5'-monophosphate) and XMP (xanthosine 5'-monophosphate), with the release of PPi. To a lesser extent, also acts on hypoxanthine. This Buchnera aphidicola subsp. Schizaphis graminum (strain Sg) protein is Xanthine-guanine phosphoribosyltransferase.